We begin with the raw amino-acid sequence, 262 residues long: Purine nucleoside phosphorylase SSP1584 (262 aa).

3 residues coordinate Zn(2+): His79, Cys124, and His141.

Belongs to the purine nucleoside phosphorylase YfiH/LACC1 family. In terms of assembly, homodimer. Cu(2+) is required as a cofactor. It depends on Zn(2+) as a cofactor.

It catalyses the reaction adenosine + phosphate = alpha-D-ribose 1-phosphate + adenine. It carries out the reaction S-methyl-5'-thioadenosine + phosphate = 5-(methylsulfanyl)-alpha-D-ribose 1-phosphate + adenine. The catalysed reaction is inosine + phosphate = alpha-D-ribose 1-phosphate + hypoxanthine. The enzyme catalyses adenosine + H2O + H(+) = inosine + NH4(+). Purine nucleoside enzyme that catalyzes the phosphorolysis of adenosine and inosine nucleosides, yielding D-ribose 1-phosphate and the respective free bases, adenine and hypoxanthine. Also catalyzes the phosphorolysis of S-methyl-5'-thioadenosine into adenine and S-methyl-5-thio-alpha-D-ribose 1-phosphate. Also has adenosine deaminase activity. The polypeptide is Purine nucleoside phosphorylase SSP1584 (Staphylococcus saprophyticus subsp. saprophyticus (strain ATCC 15305 / DSM 20229 / NCIMB 8711 / NCTC 7292 / S-41)).